We begin with the raw amino-acid sequence, 242 residues long: tRNA (guanine-N(1)-)-methyltransferase (242 aa).

S-adenosyl-L-methionine is bound by residues Gly109 and 129–134; that span reads LGDFVL.

Belongs to the RNA methyltransferase TrmD family. Homodimer.

The protein resides in the cytoplasm. It carries out the reaction guanosine(37) in tRNA + S-adenosyl-L-methionine = N(1)-methylguanosine(37) in tRNA + S-adenosyl-L-homocysteine + H(+). Its function is as follows. Specifically methylates guanosine-37 in various tRNAs. The protein is tRNA (guanine-N(1)-)-methyltransferase of Exiguobacterium sibiricum (strain DSM 17290 / CCUG 55495 / CIP 109462 / JCM 13490 / 255-15).